A 300-amino-acid chain; its full sequence is Diaminopimelate epimerase (300 aa).

Residues N15, Q47, and N67 each coordinate substrate. The active-site Proton donor is the C76. Substrate is bound by residues 77–78 (GN), N163, N197, and 215–216 (ER). C224 serves as the catalytic Proton acceptor. 225–226 (GS) lines the substrate pocket. The segment at 275–300 (SGTFDPATGEWSRDAQNDKPTDRGAA) is disordered. Positions 285-300 (WSRDAQNDKPTDRGAA) are enriched in basic and acidic residues.

Belongs to the diaminopimelate epimerase family. In terms of assembly, homodimer.

It is found in the cytoplasm. The enzyme catalyses (2S,6S)-2,6-diaminopimelate = meso-2,6-diaminopimelate. It functions in the pathway amino-acid biosynthesis; L-lysine biosynthesis via DAP pathway; DL-2,6-diaminopimelate from LL-2,6-diaminopimelate: step 1/1. Functionally, catalyzes the stereoinversion of LL-2,6-diaminopimelate (L,L-DAP) to meso-diaminopimelate (meso-DAP), a precursor of L-lysine and an essential component of the bacterial peptidoglycan. The polypeptide is Diaminopimelate epimerase (Brucella anthropi (strain ATCC 49188 / DSM 6882 / CCUG 24695 / JCM 21032 / LMG 3331 / NBRC 15819 / NCTC 12168 / Alc 37) (Ochrobactrum anthropi)).